The sequence spans 435 residues: MFILTMGLNHHTAPIDIREKLVFKESEEEMALVTLQQEKSILENVIISTCNRTEIVAVVDQIHTGRYYLKRFMANWFQMDMEKIEPYLFFHEETDAVNHLYKVTAGLDSLVLGETQILGQVKHAFEIAKQTATTGTLLNKLFREVVTFAKKVHHHTKINENAVSVSYAAVEVAKKLYGSLDNKKIVLVGAGEMSELALQNLAGSGIADITIINRTKSNAELLANQFQAKVGAYENMNEHLMLADIVLVSTSAAEPIIKQAAMQDLMEQKASSMLVIDIGLPRNVEHDCSYIPNFHLYDIDDLAGVVSANSLERQRIVLELENTIEAEVRNFFEWEKQLGVVPVIRALREKALDMQEVTMTSLENKLPGLTEREYIQIGKHMKSIINQMLKQPISELKEMSVEEDATTSIEHFKRIFGLSETDVTVIEKEQAETRS.

Substrate contacts are provided by residues 49-52 (TCNR), S109, 114-116 (ETQ), and Q120. The active-site Nucleophile is the C50. 189-194 (GAGEMS) is an NADP(+) binding site.

Belongs to the glutamyl-tRNA reductase family. As to quaternary structure, homodimer.

It catalyses the reaction (S)-4-amino-5-oxopentanoate + tRNA(Glu) + NADP(+) = L-glutamyl-tRNA(Glu) + NADPH + H(+). It functions in the pathway porphyrin-containing compound metabolism; protoporphyrin-IX biosynthesis; 5-aminolevulinate from L-glutamyl-tRNA(Glu): step 1/2. Functionally, catalyzes the NADPH-dependent reduction of glutamyl-tRNA(Glu) to glutamate 1-semialdehyde (GSA). The polypeptide is Glutamyl-tRNA reductase (Listeria monocytogenes serotype 4b (strain F2365)).